We begin with the raw amino-acid sequence, 227 residues long: 7-cyano-7-deazaguanine synthase (227 aa).

8-18 (FSGGQDSTTCL) serves as a coordination point for ATP. Zn(2+) contacts are provided by cysteine 187, cysteine 196, cysteine 199, and cysteine 202.

It belongs to the QueC family. Zn(2+) serves as cofactor.

The enzyme catalyses 7-carboxy-7-deazaguanine + NH4(+) + ATP = 7-cyano-7-deazaguanine + ADP + phosphate + H2O + H(+). Its pathway is purine metabolism; 7-cyano-7-deazaguanine biosynthesis. Catalyzes the ATP-dependent conversion of 7-carboxy-7-deazaguanine (CDG) to 7-cyano-7-deazaguanine (preQ(0)). In Aliivibrio salmonicida (strain LFI1238) (Vibrio salmonicida (strain LFI1238)), this protein is 7-cyano-7-deazaguanine synthase.